The primary structure comprises 308 residues: Ornithine carbamoyltransferase (308 aa).

Carbamoyl phosphate-binding positions include 57-60 (STRT), Q84, R108, and 135-138 (HPCQ). L-ornithine-binding positions include N166, D224, and 228 to 229 (SM). Carbamoyl phosphate-binding positions include 264-265 (CL) and R292.

Belongs to the aspartate/ornithine carbamoyltransferase superfamily. OTCase family.

It localises to the cytoplasm. The catalysed reaction is carbamoyl phosphate + L-ornithine = L-citrulline + phosphate + H(+). It participates in amino-acid degradation; L-arginine degradation via ADI pathway; carbamoyl phosphate from L-arginine: step 2/2. Its function is as follows. Reversibly catalyzes the transfer of the carbamoyl group from carbamoyl phosphate (CP) to the N(epsilon) atom of ornithine (ORN) to produce L-citrulline. This Ralstonia pickettii (strain 12J) protein is Ornithine carbamoyltransferase.